A 398-amino-acid polypeptide reads, in one-letter code: Secreted aspartic protease 2 (398 aa).

A signal peptide spans 1-18 (MFLKNIFIALAIALLVDA). Positions 19–56 (TPTTTKRSAGFVALDFSVVKTPKAFPVTNGQEGKTSKR) are cleaved as a propeptide — activation peptide. A Peptidase A1 domain is found at 70–384 (YAADITVGSN…DLDDNEISLA (315 aa)). The active site involves aspartate 88. 88–90 (DTG) is a pepstatin A binding site. A disulfide bond links cysteine 103 and cysteine 115. 141 to 142 (GD) contributes to the pepstatin A binding site. Zn(2+) is bound by residues aspartate 247 and aspartate 270. The active site involves aspartate 274. 274 to 278 (DSGTT) serves as a coordination point for pepstatin A. An intrachain disulfide couples cysteine 312 to cysteine 350. N-linked (GlcNAc...) asparagine glycosylation is found at asparagine 313 and asparagine 321.

It belongs to the peptidase A1 family. As to quaternary structure, monomer.

The protein resides in the secreted. It carries out the reaction Preferential cleavage at the carboxyl of hydrophobic amino acids, but fails to cleave 15-Leu-|-Tyr-16, 16-Tyr-|-Leu-17 and 24-Phe-|-Phe-25 of insulin B chain. Activates trypsinogen, and degrades keratin.. Functionally, secreted aspartic peptidases (SAPs) are a group of ten acidic hydrolases considered as key virulence factors. These enzymes supply the fungus with nutrient amino acids as well as are able to degrade the selected host's proteins involved in the immune defense. Induces host inflammatory cytokine production in a proteolytic activity-independent way. Plays a role in tissue damage during superficial infection. Moreover, acts toward human hemoglobin though limited proteolysis to generate a variety of antimicrobial hemocidins, enabling to compete with the other microorganisms of the same physiological niche using the microbicidal peptides generated from the host protein. Its function is as follows. Plays a key role in defense against host by cleaving histatin-5 (Hst 5), a peptide from human saliva that carries out fungicidal activity. The cleavage rate decreases in an order of SAP2 &gt; SAP9 &gt; SAP3 &gt; SAP7 &gt; SAP4 &gt; SAP1 &gt; SAP8. The first cleavage occurs between residues 'Lys-17' and 'His-18' of Hst 5, giving DSHAKRHHGYKRKFHEK and HHSHRGY peptides. Simultaneously, the DSHAKRHHGYKRK peptide is also formed. Further fragmentation by SAP2 results in FHEK and DSHAKRHHGY products. The protein is Secreted aspartic protease 2 of Candida albicans (Yeast).